We begin with the raw amino-acid sequence, 132 residues long: Large-conductance mechanosensitive channel (132 aa).

The next 2 membrane-spanning stretches (helical) occupy residues 11-31 (FISR…GAFG) and 75-95 (GSFL…FLLV).

It belongs to the MscL family. As to quaternary structure, homopentamer.

It localises to the cell inner membrane. Its function is as follows. Channel that opens in response to stretch forces in the membrane lipid bilayer. May participate in the regulation of osmotic pressure changes within the cell. This is Large-conductance mechanosensitive channel from Synechococcus sp. (strain JA-3-3Ab) (Cyanobacteria bacterium Yellowstone A-Prime).